We begin with the raw amino-acid sequence, 678 residues long: UvrABC system protein C (678 aa).

The segment covering 1-13 has biased composition (basic residues); the sequence is MKKNISYGKHKTF. The disordered stretch occupies residues 1–25; the sequence is MKKNISYGKHKTFPSKLNGLEKQHS. Positions 69–147 constitute a GIY-YIG domain; it reads HKPGVYRMFD…IKRLHPRFNV (79 aa). The UVR domain maps to 257-292; that stretch reads QSVKNDMIQAMHKAAEDLDFEQAAVYRDRLSALSHI.

Belongs to the UvrC family. Interacts with UvrB in an incision complex.

The protein resides in the cytoplasm. The UvrABC repair system catalyzes the recognition and processing of DNA lesions. UvrC both incises the 5' and 3' sides of the lesion. The N-terminal half is responsible for the 3' incision and the C-terminal half is responsible for the 5' incision. The sequence is that of UvrABC system protein C from Bartonella quintana (strain Toulouse) (Rochalimaea quintana).